Reading from the N-terminus, the 264-residue chain is 5'-nucleotidase SurE (264 aa).

Asp10, Asp11, Ser43, and Asn97 together coordinate a divalent metal cation.

This sequence belongs to the SurE nucleotidase family. It depends on a divalent metal cation as a cofactor.

Its subcellular location is the cytoplasm. The catalysed reaction is a ribonucleoside 5'-phosphate + H2O = a ribonucleoside + phosphate. Nucleotidase that shows phosphatase activity on nucleoside 5'-monophosphates. This Sulfurimonas denitrificans (strain ATCC 33889 / DSM 1251) (Thiomicrospira denitrificans (strain ATCC 33889 / DSM 1251)) protein is 5'-nucleotidase SurE.